The sequence spans 371 residues: MENETNEKLEIKGIPTHEGKYVEYNVLGNFFEVTSKYIPPIQPVGRGAYGMVCCATNSETKEEVAIKKIGNAFENRIDAKRTLREIKLLSHMDHENIIKIKDIVRPPDREEFNDVYIVYELMDTDLHQIIRSSQALTDDHCQYFLYQLLRGLKYVHSANVLHRDLKPSNLLLNANCDLKICDFGLARTTSEADFMTEYVVTRWYRAPELLLNCTEYTAAIDIWSVGCILMELIKREPLFPGRDYAQQLGLIIALLGSPEDSDLGFLRSDNARKYVKHLPRVPRHPFSQKFPDVSPLALDLAERMLVFDPAKRITVEDALNHPFLISLHEINEEPVCDSPFNFDFEQASLSEDDIKELIWNEALKFDPNTMK.

One can recognise a Protein kinase domain in the interval 38–324; that stretch reads IPPIQPVGRG…VEDALNHPFL (287 aa). ATP contacts are provided by residues 44 to 52 and lysine 67; that span reads VGRGAYGMV. Aspartate 164 (proton acceptor) is an active-site residue. Phosphothreonine is present on threonine 196. Residues 196 to 198 carry the TXY motif; the sequence is TEY. Position 198 is a phosphotyrosine (tyrosine 198).

The protein belongs to the protein kinase superfamily. CMGC Ser/Thr protein kinase family. MAP kinase subfamily. It depends on Mg(2+) as a cofactor. In terms of processing, dually phosphorylated on Thr-196 and Tyr-198, which activates the enzyme. Very low autophosphorylation, although dramatically increased when Mn(2+) is added to the reaction instead of Mg(2+).

It catalyses the reaction L-seryl-[protein] + ATP = O-phospho-L-seryl-[protein] + ADP + H(+). The enzyme catalyses L-threonyl-[protein] + ATP = O-phospho-L-threonyl-[protein] + ADP + H(+). With respect to regulation, activated by tyrosine and threonine phosphorylation. This Nicotiana tabacum (Common tobacco) protein is Mitogen-activated protein kinase homolog NTF6 (NTF6).